A 392-amino-acid polypeptide reads, in one-letter code: N-acyl-phosphatidylethanolamine-hydrolyzing phospholipase D (392 aa).

N-acetylmethionine is present on M1. Over residues 1–16 (MDENETNQLLMTSNQY) the composition is skewed to polar residues. The disordered stretch occupies residues 1-39 (MDENETNQLLMTSNQYPKEAVRKRQNSRNSGGSDSSRFS). Low complexity predominate over residues 27 to 36 (SRNSGGSDSS). Zn(2+)-binding residues include H183 and H185. An N-acyl-1,2-diacyl-sn-glycero-3-phosphoethanolamine is bound at residue Y186. Zn(2+) is bound by residues D187, H188, and H251. Deoxycholate contacts are provided by K254 and M258. Position 282 (D282) interacts with Zn(2+). H319 provides a ligand contact to an N-acyl-1,2-diacyl-sn-glycero-3-phosphoethanolamine. H341 is a Zn(2+) binding site. A346 lines the deoxycholate pocket.

Belongs to the NAPE-PLD family. Homodimer. Bile acids promote the assembly of inactive monomers into an active dimer and enable catalysis. Requires Zn(2+) as cofactor. Widely expressed. Highest expression in brain, kidney and testis (at protein level). Expressed in adipose tissue (at protein level).

Its subcellular location is the golgi apparatus membrane. The protein localises to the early endosome membrane. It localises to the nucleus envelope. The protein resides in the nucleus. It is found in the nucleoplasm. The catalysed reaction is an N-acyl-1,2-diacyl-sn-glycero-3-phosphoethanolamine + H2O = an N-acylethanolamine + a 1,2-diacyl-sn-glycero-3-phosphate + H(+). It catalyses the reaction N-butanoyl-1-hexadecanoyl-2-(9Z,12Z-octadecadienoyl)-sn-glycero-3-phosphoethanolamine + H2O = N-butanoyl ethanolamine + 1-hexadecanoyl-2-(9Z,12Z-octadecadienoyl)-sn-glycero-3-phosphate + H(+). It carries out the reaction N-hexanoyl-1-hexadecanoyl-2-(9Z,12Z-octadecadienoyl)-sn-glycero-3-phosphoethanolamine + H2O = N-hexanoyl ethanolamine + 1-hexadecanoyl-2-(9Z,12Z-octadecadienoyl)-sn-glycero-3-phosphate + H(+). The enzyme catalyses N-octanoyl-1-hexadecanoyl-2-(9Z,12Z-octadecadienoyl)-sn-glycero-3-phosphoethanolamine + H2O = N-octanoyl ethanolamine + 1-hexadecanoyl-2-(9Z,12Z-octadecadienoyl)-sn-glycero-3-phosphate + H(+). The catalysed reaction is N-decanoyl-1-hexadecanoyl-2-(9Z,12Z-octadecadienoyl)-sn-glycero-3-phosphoethanolamine + H2O = N-decanoyl ethanolamine + 1-hexadecanoyl-2-(9Z,12Z-octadecadienoyl)-sn-glycero-3-phosphate + H(+). It catalyses the reaction N-dodecanoyl-1,2-di-(9Z-octadecenoyl)-sn-glycero-3-phosphoethanolamine + H2O = N-dodecanoylethanolamine + 1,2-di-(9Z-octadecenoyl)-sn-glycero-3-phosphate + H(+). It carries out the reaction N-tetradecanoyl-1,2-di-(9Z-octadecenoyl)-sn-glycero-3-phosphoethanolamine + H2O = N-tetradecanoylethanolamine + 1,2-di-(9Z-octadecenoyl)-sn-glycero-3-phosphate + H(+). The enzyme catalyses N-hexadecanoyl-1,2-di-(9Z-octadecenoyl)-sn-glycero-3-phosphoethanolamine + H2O = N-hexadecanoylethanolamine + 1,2-di-(9Z-octadecenoyl)-sn-glycero-3-phosphate + H(+). The catalysed reaction is N,1-dihexadecanoyl-2-(9Z,12Z-octadecadienoyl)-sn-glycero-3-phosphoethanolamine + H2O = 1-hexadecanoyl-2-(9Z,12Z-octadecadienoyl)-sn-glycero-3-phosphate + N-hexadecanoylethanolamine + H(+). It catalyses the reaction N-octadecanoyl-1,2-di-(9Z-octadecenoyl)-sn-glycero-3-phosphoethanolamine + H2O = N-octadecanoyl ethanolamine + 1,2-di-(9Z-octadecenoyl)-sn-glycero-3-phosphate + H(+). It carries out the reaction N,1,2-tri-(9Z-octadecenoyl)-sn-glycero-3-phosphoethanolamine + H2O = N-(9Z-octadecenoyl) ethanolamine + 1,2-di-(9Z-octadecenoyl)-sn-glycero-3-phosphate + H(+). The enzyme catalyses N-(5Z,8Z,11Z,14Z-eicosatetraenoyl)-1,2-diacyl-sn-glycero-3-phosphoethanolamine + H2O = N-(5Z,8Z,11Z,14Z-eicosatetraenoyl)-ethanolamine + a 1,2-diacyl-sn-glycero-3-phosphate + H(+). The catalysed reaction is N-(5Z,8Z,11Z,14Z-eicosatetraenoyl)-1,2-di-(9Z-octadecenoyl)-sn-glycero-3-phosphoethanolamine + H2O = N-(5Z,8Z,11Z,14Z-eicosatetraenoyl)-ethanolamine + 1,2-di-(9Z-octadecenoyl)-sn-glycero-3-phosphate + H(+). It catalyses the reaction 1-O-(1Z-octadecenoyl)-2-(9Z-octadecenoyl)-sn-glycero-3-phospho-N-hexadecanoyl-ethanolamine + H2O = 1-O-(1Z-octadecenoyl)-2-(9Z-octadecenoyl)-sn-glycero-3-phosphate + N-hexadecanoylethanolamine + H(+). It carries out the reaction N,1-diacyl-sn-glycero-3-phosphoethanolamine + H2O = an N-acylethanolamine + a 1-acyl-sn-glycero-3-phosphate + H(+). The enzyme catalyses N,1-dihexadecanoyl-sn-glycero-3-phosphoethanolamine + H2O = N-hexadecanoylethanolamine + 1-hexadecanoyl-sn-glycero-3-phosphate + H(+). The catalysed reaction is N-(5Z,8Z,11Z,14Z-eicosatetraenoyl)-1-(9Z-octadecenoyl)-sn-glycero-3-phosphoethanolamine + H2O = N-(5Z,8Z,11Z,14Z-eicosatetraenoyl)-ethanolamine + 1-(9Z-octadecenoyl)-sn-glycero-3-phosphate + H(+). Activated by divalent cations. Activated by bile acids. D-type phospholipase that hydrolyzes N-acyl-phosphatidylethanolamines (NAPEs) to produce bioactive N-acylethanolamines/fatty acid ethanolamides (NAEs/FAEs) and phosphatidic acid. Cleaves the terminal phosphodiester bond of diacyl- and alkenylacyl-NAPEs, primarily playing a role in the generation of long-chain saturated and monounsaturated NAEs in the brain. May control NAPE homeostasis in dopaminergic neuron membranes and regulate neuron survival, partly through RAC1 activation. As a regulator of lipid metabolism in the adipose tissue, mediates the crosstalk between adipocytes, gut microbiota and immune cells to control body temperature and weight. In particular, regulates energy homeostasis by promoting cold-induced brown or beige adipocyte differentiation program to generate heat from fatty acids and glucose. Has limited D-type phospholipase activity toward N-acyl lyso-NAPEs. This chain is N-acyl-phosphatidylethanolamine-hydrolyzing phospholipase D (NAPEPLD), found in Bos taurus (Bovine).